The following is a 391-amino-acid chain: Formate-dependent phosphoribosylglycinamide formyltransferase (391 aa).

Residues 20–21 and Glu80 contribute to the N(1)-(5-phospho-beta-D-ribosyl)glycinamide site; that span reads EL. ATP-binding positions include Arg112, Lys153, 158–163, 193–196, and Glu201; these read SSGKGQ and EGFI. Residues 117 to 306 enclose the ATP-grasp domain; it reads RLAAEELDLS…EFALHVRAFT (190 aa). Residues Glu265 and Glu277 each coordinate Mg(2+). Residues Asp284, Lys354, and 361–362 contribute to the N(1)-(5-phospho-beta-D-ribosyl)glycinamide site; that span reads RR.

It belongs to the PurK/PurT family. In terms of assembly, homodimer.

The enzyme catalyses N(1)-(5-phospho-beta-D-ribosyl)glycinamide + formate + ATP = N(2)-formyl-N(1)-(5-phospho-beta-D-ribosyl)glycinamide + ADP + phosphate + H(+). It participates in purine metabolism; IMP biosynthesis via de novo pathway; N(2)-formyl-N(1)-(5-phospho-D-ribosyl)glycinamide from N(1)-(5-phospho-D-ribosyl)glycinamide (formate route): step 1/1. In terms of biological role, involved in the de novo purine biosynthesis. Catalyzes the transfer of formate to 5-phospho-ribosyl-glycinamide (GAR), producing 5-phospho-ribosyl-N-formylglycinamide (FGAR). Formate is provided by PurU via hydrolysis of 10-formyl-tetrahydrofolate. This Vibrio parahaemolyticus serotype O3:K6 (strain RIMD 2210633) protein is Formate-dependent phosphoribosylglycinamide formyltransferase.